The primary structure comprises 466 residues: 3-isopropylmalate dehydratase large subunit (466 aa).

Cys347, Cys407, and Cys410 together coordinate [4Fe-4S] cluster.

It belongs to the aconitase/IPM isomerase family. LeuC type 1 subfamily. In terms of assembly, heterodimer of LeuC and LeuD. It depends on [4Fe-4S] cluster as a cofactor.

The enzyme catalyses (2R,3S)-3-isopropylmalate = (2S)-2-isopropylmalate. It functions in the pathway amino-acid biosynthesis; L-leucine biosynthesis; L-leucine from 3-methyl-2-oxobutanoate: step 2/4. Its function is as follows. Catalyzes the isomerization between 2-isopropylmalate and 3-isopropylmalate, via the formation of 2-isopropylmaleate. The protein is 3-isopropylmalate dehydratase large subunit of Klebsiella pneumoniae (strain 342).